The sequence spans 476 residues: Aspartyl/glutamyl-tRNA(Asn/Gln) amidotransferase subunit B (476 aa).

The protein belongs to the GatB/GatE family. GatB subfamily. As to quaternary structure, heterotrimer of A, B and C subunits.

The enzyme catalyses L-glutamyl-tRNA(Gln) + L-glutamine + ATP + H2O = L-glutaminyl-tRNA(Gln) + L-glutamate + ADP + phosphate + H(+). It catalyses the reaction L-aspartyl-tRNA(Asn) + L-glutamine + ATP + H2O = L-asparaginyl-tRNA(Asn) + L-glutamate + ADP + phosphate + 2 H(+). In terms of biological role, allows the formation of correctly charged Asn-tRNA(Asn) or Gln-tRNA(Gln) through the transamidation of misacylated Asp-tRNA(Asn) or Glu-tRNA(Gln) in organisms which lack either or both of asparaginyl-tRNA or glutaminyl-tRNA synthetases. The reaction takes place in the presence of glutamine and ATP through an activated phospho-Asp-tRNA(Asn) or phospho-Glu-tRNA(Gln). The polypeptide is Aspartyl/glutamyl-tRNA(Asn/Gln) amidotransferase subunit B (Bacillus pumilus (strain SAFR-032)).